Reading from the N-terminus, the 83-residue chain is MENDAGEFVDLYCPRKCSASNRIIHAKDHASIQLCVAEVDPQTGRMTDSTKSYALCGAIRRMGESDDCIVRLTKKDGILAKNF.

Belongs to the eukaryotic ribosomal protein eS21 family. In terms of assembly, component of the 40S small ribosomal subunit.

The protein localises to the cytoplasm. The protein resides in the cytosol. It is found in the rough endoplasmic reticulum. The chain is Small ribosomal subunit protein eS21 (RpS21) from Biphyllus lunatus (Beetle).